The chain runs to 175 residues: Putative adenylate cyclase MJ0240 (175 aa).

The CYTH domain maps to 1-175; the sequence is MIEVEIKVKI…RKSYLELRGL (175 aa). The active-site Proton acceptor is the Tyr-37.

Belongs to the adenylyl cyclase CyaB family.

It localises to the cytoplasm. The catalysed reaction is ATP = 3',5'-cyclic AMP + diphosphate. Its function is as follows. Could catalyze the biosynthesis of cyclic AMP (cAMP) from ATP. This Methanocaldococcus jannaschii (strain ATCC 43067 / DSM 2661 / JAL-1 / JCM 10045 / NBRC 100440) (Methanococcus jannaschii) protein is Putative adenylate cyclase MJ0240.